Reading from the N-terminus, the 347-residue chain is Tetracycline resistance determinant (347 aa).

Transmembrane regions (helical) follow at residues 3–20 (VLGA…LIVA), 30–52 (SPAA…PVEL), 73–95 (CSAV…PLFL), 108–130 (LVVI…LIAS), 137–156 (LAIV…ATTG), 161–183 (MWGI…TVIT), 204–226 (CAGQ…AVAL), and 294–316 (GFHI…TWFL). Residues 321 to 347 (EETAPEEERPAESGAGAKNGPLPASDA) form a disordered region.

This sequence belongs to the major facilitator superfamily. TCR/Tet family.

It is found in the cell membrane. Resistance to tetracycline by an active tetracycline efflux. This is an energy-dependent process that decreases the accumulation of the antibiotic in whole cells. This protein functions as a metal-tetracycline/H(+) antiporter. The protein is Tetracycline resistance determinant (tetB) of Streptomyces rimosus.